The primary structure comprises 86 residues: U22-theraphotoxin-Cg1a (86 aa).

Positions 1–20 (MKVSVVLAITVLALLSVAYA) are cleaved as a signal peptide. The propeptide occupies 21–51 (SEFEEKELVKEVVRTIFLGKEDAALREETDR). 3 cysteine pairs are disulfide-bonded: C53–C67, C60–C72, and C66–C79. F85 bears the Phenylalanine amide mark.

This sequence belongs to the neurotoxin 10 (Hwtx-1) family. 42 (Jztx-44) subfamily. In terms of tissue distribution, expressed by the venom gland.

Its subcellular location is the secreted. In terms of biological role, probable ion channel inhibitor. This Chilobrachys guangxiensis (Chinese earth tiger tarantula) protein is U22-theraphotoxin-Cg1a.